A 406-amino-acid chain; its full sequence is Argininosuccinate synthase (406 aa).

Residues 12–20 (AYSGGLDTS) and Ala39 contribute to the ATP site. Residues Tyr90 and Ser95 each contribute to the L-citrulline site. Gly120 provides a ligand contact to ATP. Residues Thr122, Asn126, and Asp127 each contribute to the L-aspartate site. An L-citrulline-binding site is contributed by Asn126. L-citrulline-binding residues include Arg130, Ser179, Ser188, Glu264, and Tyr276.

Belongs to the argininosuccinate synthase family. Type 1 subfamily. As to quaternary structure, homotetramer.

It is found in the cytoplasm. It carries out the reaction L-citrulline + L-aspartate + ATP = 2-(N(omega)-L-arginino)succinate + AMP + diphosphate + H(+). It participates in amino-acid biosynthesis; L-arginine biosynthesis; L-arginine from L-ornithine and carbamoyl phosphate: step 2/3. In Geotalea uraniireducens (strain Rf4) (Geobacter uraniireducens), this protein is Argininosuccinate synthase.